The sequence spans 1706 residues: MGSKDHAVFFREMTQLILNEMPKAGYSSILNDFVESNFFVIDGDSLLVTCLGVKSFKWGQNLHFFYLVECYLVDLLSNGGQFTIVFFKDAEYAYFDFPELLSLRTALILHLQHNTNIDVQTEFSGCLSQDWKLFLEQHYPYFLIVSEEGLSDLQTYLFNFLIIHSWGMKVNVVLSSGHESDTLRFYAYTMESTDRNQTFSKENETVIQSAYKSLIQHLEEIRVLVLATHFEHLKWNDMMEEAYQTLFLLQHLWSEGSDIQRVLCVTSCSLSLRMYHRVLVHSNCLSLQEVEDFCRLRCLCVAFQLHLPLSQRACSRVITCSWIRNSDSFLKMNKWCEYFILSNLNVFGCWNLNLNHVSDLYDEQLLKNIAFYYEFESTQEPHLNLGDSIRRDYEDLWNVVSHLVKEFNVGKSFPLRTTRRHFLRQEKSVIQEISLEKMPSVGFIPMTSAVIDEFVGDMMKDLPILKSDDPVVPSLFKQKTSDELLHWHAQRLLSDDYDRIKCHVDEQSRDPHVLDFLKKIQDYQQFYGKSLESISTKVIVTQTTRPKEDSSGASGEILQNTKPHQITKKSKKKSFLKEDQNKAQQNDDLLFSIEEEMKNNLHSGIRKLEDYLTSCASNSVKFGVEMLGLIACFKAWKKHCRGEGKISKDLSIAVQMMKRIHSLLERYPEILEAEHHQYIAKCLKYLGFNDLANSLDPTLIGDDKNKKKYSIDIGPARFQLQYMGHYLIRDERKDRDPRVQDFIPNAWQQELLDVVDKNESAVIVAPTSSGKTYASYYCMEKVLRESDVGVVVYVAPAKSLVGQVAATVENRFTKTLPAGRTLCGAFTRDYCHNVLNCQVLITVPECFEILLLAPHRQKWVERIRYVIFDEVHYLGREVGAKFWELLLVIIRCPFLVLSATINNPNLLTKWLQSVKQYWKQADKIMEEKCISEKQADKCLNFLQDHSYKNQSYEVRLVLCGERYNDLEKHICSVKHDDVYFDHFHPCAALTTDIIEKYGFPPDLTLTPQESIQLYDTMAQVWETWPRAQELCPEEFILFKNKIVIKKLDARKYEENLKAELTNWIKNGQVKKVKRVLKNLSPDSLSSSKDMVKMFPLLVEKLRQMDKLPAIFFLFKNDDVGKRAGSVCTFLEKTETKSHPHTECHSYVFAIDEVLEKVRKTQKRITKKNPKKAEKLERKKVYRAEYINFLENLKILEISEDCTYADVKALHTEITRNKDSTLERVLPRVRFTRHGKELKALAQRGIGYHHSSMYFKEKEFVEILFVKGLIRVVTATETLALGIHMPCKSVVFAQDSVYLDALNYRQMSGRAGRRGQDLLGNVYFFDIPLPKIKRLLASSVPELRGQFPLSITLVLRLMLLASKGDDPEDAKAKVLSVLKHSLLSFKRRRAMETLKLYFLFSLQLLIKEDYLNKKGNPKKFAGLASYLHGHEPSNLVFVNFLKRGLFHNLCKPAWKGSQQFSQDVMEKLVLVLANLFGRKYIPAKFQNANLSFSQSKVILAELPEDFKAALYEYNLAVMKDFASFLLIASKSVNMKKEHQLPLSRIKFTGKECEDSQLVSHLMSCKKGRVAISPFVCLSGNTDNDLLRPETINQVILRTVGVSGTQAPLLWPWKLDNRGRRMPLNAYVLNFYKHNCLTRLDQKNGMRMGQLLKCLKDFAFNIQAISDSLSELCENKRDNVVLAFKQLSQTFYEKLQEMQIQMSQNHLE.

The interval 545–580 is disordered; the sequence is RPKEDSSGASGEILQNTKPHQITKKSKKKSFLKEDQ. Residues 551 to 564 show a composition bias toward polar residues; the sequence is SGASGEILQNTKPH. Basic residues predominate over residues 565–574; it reads QITKKSKKKS. Residues 752–919 form the Helicase ATP-binding domain; sequence LDVVDKNESA…WLQSVKQYWK (168 aa). 765–772 provides a ligand contact to ATP; sequence APTSSGKT. The DEAH box signature appears at 869–872; it reads DEVH. A Helicase C-terminal domain is found at 1205–1354; the sequence is DVKALHTEIT…QFPLSITLVL (150 aa).

This sequence belongs to the helicase family.

It carries out the reaction ATP + H2O = ADP + phosphate + H(+). This chain is Probable ATP-dependent RNA helicase DDX60-like, found in Homo sapiens (Human).